The primary structure comprises 220 residues: Pro-Pro endopeptidase (220 aa).

Positions M1–A26 are cleaved as a signal peptide. One can recognise an ATLF-like domain in the interval K35–K220. 2 interacts with substrate peptide regions span residues K101–W103 and G117–S119. Zn(2+) is bound at residue H142. The active-site Proton acceptor is E143. Residues H146, Y178, and E185 each coordinate Zn(2+).

The protein belongs to the peptidase M34 family. Pro-Pro endopeptidase subfamily. As to quaternary structure, monomer. The cofactor is Zn(2+).

Its subcellular location is the secreted. It catalyses the reaction The enzyme catalyzes the hydrolytic cleavage of peptide bonds between two proline residues.. Is inhibited by the chelating agent o-phenanthroline in vitro. Its function is as follows. Zinc-dependent endoprotease with a unique preference for proline residues surrounding the scissile bond. Exhibits a high preference for an asparagine at the P2 position and hydrophobic residues (Val, Ile, Leu) at the P3 position. Efficiently cleaves the LPXTG cell surface proteins CD630_28310 and CD630_32460 at multiple cleavage sites in vivo. Has a role in the regulation of C.difficile adhesion versus motility by cleaving surface adhesion proteins such as the collagen binding protein CD630_28310, and is important for efficient infection. Is also able to cleave fibronectin and fibrinogen in vitro; cleaves at the N-terminus of the beta-chain of fibrinogen. Destabilizes the fibronectin network produced by human fibroblasts. Therefore, may be important in key steps of clostridial pathogenesis by degrading extracellular matrix components associated with the gut epithelial cells. To a lesser extent, IgA1, IgA2, and human HSP 90-beta, but not HSP 90-alpha, are also substrates for the enzyme. Is not active on different collagen types, casein and gelatin. This chain is Pro-Pro endopeptidase, found in Clostridioides difficile (strain 630) (Peptoclostridium difficile).